Consider the following 510-residue polypeptide: ATP synthase subunit alpha (510 aa).

170–177 (GDRQTGKT) contributes to the ATP binding site.

It belongs to the ATPase alpha/beta chains family. F-type ATPases have 2 components, CF(1) - the catalytic core - and CF(0) - the membrane proton channel. CF(1) has five subunits: alpha(3), beta(3), gamma(1), delta(1), epsilon(1). CF(0) has three main subunits: a(1), b(2) and c(9-12). The alpha and beta chains form an alternating ring which encloses part of the gamma chain. CF(1) is attached to CF(0) by a central stalk formed by the gamma and epsilon chains, while a peripheral stalk is formed by the delta and b chains.

The protein resides in the cell inner membrane. The catalysed reaction is ATP + H2O + 4 H(+)(in) = ADP + phosphate + 5 H(+)(out). Functionally, produces ATP from ADP in the presence of a proton gradient across the membrane. The alpha chain is a regulatory subunit. This chain is ATP synthase subunit alpha, found in Dictyoglomus thermophilum (strain ATCC 35947 / DSM 3960 / H-6-12).